We begin with the raw amino-acid sequence, 892 residues long: MSDSISDSKSSELLNSTFYSSTSINTLDHARTFRNSLILKEISDQSLNSSIKPCESVLDRDVESSVLQRSFGESNARDSEVQTVNMTTSPSLSALADILNERSKYADQKTRKAQNIESSIIEEEEEAEEQNNSINYHEDITGSRLSVREEANENLAMTSPNLIDIDGSNSIQVAPLSLPSFEEPDFLSTPRVKPDSQGPRSKVSTRRTILERDNNLPVKREENTIINSETESTTHSAPFLKEDPKPSPPSSKLYNPKVRLNKAEARKYTDSSAQRTTSAGSVLEDTSMHKKKKSIFSFLKKKEPKPVIGNNSVTNEKNKMSSSSTFSMNIQTSLKTPEKLKKKSHSSSSIFNSFLKGKIETSDSPRKEPMRQKKRTPKSKDKKQDTEQIIDAASVLSTESPLLRKNHDDTPVKIDHVTRSIDQRKPTPLNMDLILGGDKQINTPLQEHVREDDDAKNDLQLPTKDNFLSLDYEAPSPAFSKHDTGEVLFPKFLDNHEVDSIVSLERTRSTKSNKRSSMNSQRRSLTDTLSIKAQSEGMFITEASSVVLSTPDLTKSPASSILKNGRFEYSDNFSREHSYEGTTNEDFLDIKDDSGPLKKDDIFLESIEQKFDQLVMASDEEKTEVERDVPKPREEPLKKDSERQSVFADDDNELISDIMEFASFINFGDDDLNLDLDLGDTTASYATETPEPVGNDEVNRSGTFDTRNNKEDSYKERETQSYSAAGATTYGDERQGQLHTFEQDGSEINDNEFENEDFNKHIEQPIEVTPRNNAYLPEFEPNRPVSMSFKGLKAPRMNTSFIDSMTPDSPVKSDLTSLGEVYVNSNNDQGVRFSSQIILYDTYGEFEYDRHPEISTCNQLTPQLAQMIKLELNELKSAMEVHDDSRCYTHFY.

Residues Ser43 and Ser133 each carry the phosphoserine modification. 2 disordered regions span residues 185–287 (DFLS…EDTS) and 305–387 (KPVI…QDTE). Over residues 208–223 (TILERDNNLPVKREEN) the composition is skewed to basic and acidic residues. 2 stretches are compositionally biased toward polar residues: residues 224–236 (TIINSETESTTHS) and 270–280 (DSSAQRTTSAG). The residue at position 281 (Ser281) is a Phosphoserine. Residues 309–335 (GNNSVTNEKNKMSSSSTFSMNIQTSLK) show a composition bias toward polar residues. A compositionally biased stretch (low complexity) spans 346–356 (SSSSIFNSFLK). Residues 357–371 (GKIETSDSPRKEPMR) show a composition bias toward basic and acidic residues. 2 positions are modified to phosphoserine: Ser364 and Ser394. At Thr410 the chain carries Phosphothreonine. A phosphoserine mark is found at Ser476, Ser500, and Ser503. Disordered regions lie at residues 506 to 526 (RTRSTKSNKRSSMNSQRRSLT), 618 to 644 (SDEEKTEVERDVPKPREEPLKKDSERQ), and 685 to 734 (YATE…GDER). Ser618 carries the phosphoserine modification. Basic and acidic residues predominate over residues 624–643 (EVERDVPKPREEPLKKDSER). Thr703 carries the phosphothreonine modification. Over residues 707–719 (RNNKEDSYKERET) the composition is skewed to basic and acidic residues. A phosphoserine mark is found at Ser746 and Ser825.

As to quaternary structure, may interact with CHS3 and seems to be an adapter (along with SKT5) to link CHS3 to septins.

The protein is Protein BNI4 (BNI4) of Saccharomyces cerevisiae (strain ATCC 204508 / S288c) (Baker's yeast).